Here is a 308-residue protein sequence, read N- to C-terminus: Aspartate carbamoyltransferase catalytic subunit (308 aa).

2 residues coordinate carbamoyl phosphate: arginine 59 and threonine 60. An L-aspartate-binding site is contributed by lysine 87. Carbamoyl phosphate-binding residues include arginine 109, histidine 137, and glutamine 140. L-aspartate is bound by residues arginine 170 and arginine 224. 2 residues coordinate carbamoyl phosphate: glycine 265 and proline 266.

This sequence belongs to the aspartate/ornithine carbamoyltransferase superfamily. ATCase family. In terms of assembly, heterododecamer (2C3:3R2) of six catalytic PyrB chains organized as two trimers (C3), and six regulatory PyrI chains organized as three dimers (R2).

The catalysed reaction is carbamoyl phosphate + L-aspartate = N-carbamoyl-L-aspartate + phosphate + H(+). It functions in the pathway pyrimidine metabolism; UMP biosynthesis via de novo pathway; (S)-dihydroorotate from bicarbonate: step 2/3. Catalyzes the condensation of carbamoyl phosphate and aspartate to form carbamoyl aspartate and inorganic phosphate, the committed step in the de novo pyrimidine nucleotide biosynthesis pathway. This is Aspartate carbamoyltransferase catalytic subunit from Flavobacterium psychrophilum (strain ATCC 49511 / DSM 21280 / CIP 103535 / JIP02/86).